The primary structure comprises 164 residues: F-box protein At4g05010 (164 aa).

Residues 38-57 are disordered; the sequence is SKRAPENDSPPVKRPSHETT. Positions 61 to 109 constitute an F-box domain; it reads RSLLETLHQDILIRVLCHVDHEDLATLKRVSKTIRKAVIEAKKSHFDYS.

This Arabidopsis thaliana (Mouse-ear cress) protein is F-box protein At4g05010.